The sequence spans 1498 residues: Mitogen-activated protein kinase kinase kinase nsy-1 (1498 aa).

Disordered regions lie at residues 1–35 (MSQNNKRQVQHNHEMSNDVCPLPLPPRGAPPPTAY) and 190–209 (LQSYDKNNNDDDSKPPFART). The span at 22–33 (LPLPPRGAPPPT) shows a compositional bias: pro residues. A Protein kinase domain is found at 664 to 925 (SNERVVLGKG…AKDLLQDPFI (262 aa)). Residues 670-678 (LGKGTYGTV) and Lys-693 each bind ATP. Catalysis depends on Asp-790, which acts as the Proton acceptor. Residues 1022-1050 (IDHARNRTFSSSSPVPDGQSSAGTNMSHP) are disordered. Residues 1031-1042 (SSSSPVPDGQSS) show a composition bias toward low complexity. The stretch at 1276–1314 (SREERVREDRKELRTLQEENEILIERLLQVERELNAQLK) forms a coiled coil. The tract at residues 1461 to 1498 (QPVFLSPMRSRDDSLDDYHSSSADDMYTGAAAETSSGN) is disordered. Over residues 1469–1479 (RSRDDSLDDYH) the composition is skewed to basic and acidic residues.

This sequence belongs to the protein kinase superfamily. STE Ser/Thr protein kinase family. MAP kinase kinase kinase subfamily. As to quaternary structure, interacts with unc-43. Interacts with sek-1. The cofactor is Mg(2+). In terms of processing, may be phosphorylated upon pathogenic bacterial infection. May be regulated by proteasomal degradation mediated by the E3-ubiquitin ligase rle-1. Expressed in intestine, hypodermis, rectal gland cell and neurons including sensory AWC neurons.

The protein localises to the cell projection. The protein resides in the axon. Its subcellular location is the perikaryon. It carries out the reaction L-seryl-[protein] + ATP = O-phospho-L-seryl-[protein] + ADP + H(+). The catalysed reaction is L-threonyl-[protein] + ATP = O-phospho-L-threonyl-[protein] + ADP + H(+). In terms of biological role, serine/threonine-protein kinase which, by phosphorylating and activating sek-1, plays an important role in the activation of the p38 pathway also composed of the downstream effectors sek-1 and pmk-1. Downstream of CaMKII unc-43 and adapter protein tir-1, plays a role in determining asymmetric cell fates in olfactory AWC neurons during neuronal development. Activation results in the repression of odorant receptor str-2 expression in one of the 2 AWC neurons. Involved in resistance to pathogenic Gram-positive and Gram-negative bacterial and fungal infection. Involved in resistance to the nematotoxic C.cinerea galectin Cgl2. Probably by activating the sek1/pmk-1/skn-1 pathway, involved in the up-regulation of gcs-1 and glutathione-S-transferase gst-4 expression upon bacterial infection. Probably downstream of tir-1 and nipi-3, required for the expression of antimicrobial peptide nlp-29 in the epidermis in response to fungal infection or physical injury. Plays a role in resistance to several environmental stresses including oxidative, protein misfolding (ER) and osmotic stresses, and DNA-damaging reagents. Plays a role in the stabilization of transcription factor rnt-1 in the intestine during oxidative stress. Involved in germline apoptosis induced by heavy metals, such as Cu(2+). In addition, plays a role in the up-regulation of gcs-1 upon arsenite treatment, most likely through activation of pmk-1, to confer protection against toxicity induced by heavy metals. Plays a role downstream of tir-1 in regulating susceptibility to anoxia. Involved in egg laying. This is Mitogen-activated protein kinase kinase kinase nsy-1 from Caenorhabditis elegans.